Consider the following 281-residue polypeptide: Phosphonates import ATP-binding protein PhnC (281 aa).

Residues 5-253 (IEVCGLTKSF…MLRDLYGTEA (249 aa)) enclose the ABC transporter domain. 38–45 (GASGSGKS) is a binding site for ATP.

It belongs to the ABC transporter superfamily. Phosphonates importer (TC 3.A.1.9.1) family. As to quaternary structure, the complex is composed of two ATP-binding proteins (PhnC), two transmembrane proteins (PhnE) and a solute-binding protein (PhnD).

It is found in the cell inner membrane. It carries out the reaction phosphonate(out) + ATP + H2O = phosphonate(in) + ADP + phosphate + H(+). In terms of biological role, part of the ABC transporter complex PhnCDE involved in phosphonates import. Responsible for energy coupling to the transport system. This Cupriavidus pinatubonensis (strain JMP 134 / LMG 1197) (Cupriavidus necator (strain JMP 134)) protein is Phosphonates import ATP-binding protein PhnC.